The following is a 109-amino-acid chain: DNA-directed RNA polymerase subunit I (109 aa).

It catalyses the reaction RNA(n) + a ribonucleoside 5'-triphosphate = RNA(n+1) + diphosphate. DNA-dependent RNA polymerase catalyzes the transcription of DNA into RNA using the four ribonucleoside triphosphates as substrates. This is DNA-directed RNA polymerase subunit I (rpoI) from Methanocaldococcus jannaschii (strain ATCC 43067 / DSM 2661 / JAL-1 / JCM 10045 / NBRC 100440) (Methanococcus jannaschii).